The primary structure comprises 301 residues: E3 ubiquitin-protein ligase RNF144B (301 aa).

Residues 26–242 (PLVTCKLCLC…YDKGPCRNKL (217 aa)) form a TRIAD supradomain region. Zn(2+)-binding residues include C30, C33, C53, C56, C121, C126, C145, C148, C153, C156, H161, C166, C191, and C194. Residues 30-80 (CKLCLCEQSLDKMTMLQECQCIFCTPCLKQYMVLSIREGCGSPITCPDMVC) form an RING-type 1 zinc finger. The IBR-type zinc-finger motif lies at 101-166 (QLYQRLKFER…KDAWHEESSC (66 aa)). The RING-type 2; atypical zinc-finger motif lies at 191–220 (CPVCRIYIERNEGCAQMMCKNCKHTFCWYC). The active site involves C204. C209, C212, C217, C220, H232, and C238 together coordinate Zn(2+). A helical transmembrane segment spans residues 256–276 (VVGILVGLGVIALVTSPLLLL).

The protein belongs to the RBR family. RNF144 subfamily. As to quaternary structure, interacts with UBE2L3, UBE2L6 and LCMT2, as well as with BAX. Interacts with TBK1; this interaction inhibits TBK1 phosphorylation and 'Lys-63'-linked polyubiquitination. Auto-ubiquitinated.

It localises to the mitochondrion membrane. The protein resides in the cytoplasm. The enzyme catalyses [E2 ubiquitin-conjugating enzyme]-S-ubiquitinyl-L-cysteine + [acceptor protein]-L-lysine = [E2 ubiquitin-conjugating enzyme]-L-cysteine + [acceptor protein]-N(6)-ubiquitinyl-L-lysine.. It participates in protein modification; protein ubiquitination. Its function is as follows. E3 ubiquitin-protein ligase which accepts ubiquitin from E2 ubiquitin-conjugating enzymes UBE2L3 and UBE2L6 in the form of a thioester and then directly transfers the ubiquitin to targeted substrates such as LCMT2, thereby promoting their degradation. Induces apoptosis via a p53/TP53-dependent but caspase-independent mechanism. Plays a crucial role in maintaining the genomic stability by controlling the degradation of multiple proteins involved in mitotic progression and DNA damage. Regulates epithelial homeostasis by mediating degradation of CDKN1A and isoform 2 of TP63. Plays a regulatory role in innate immunity by negatively regulating IRF3 activation and IFN-beta production. Mechanistically, inhibits TBK1 phosphorylation and 'Lys-63'-linked polyubiquitination independently of its E3 ligase activity. Alternatively, promotes 'Lys-27' and 'Lys-33'-linked ubiquitination of IFIH1/MDA5, promoting selective autophagic degradation of IFIH1/MDA5 to inhibit antiviral response. The chain is E3 ubiquitin-protein ligase RNF144B (Rnf144b) from Mus musculus (Mouse).